The chain runs to 370 residues: StAR-related lipid transfer protein 7, mitochondrial (370 aa).

Residues 1 to 58 constitute a mitochondrion transit peptide; that stretch reads MLPRRLLAAWLAGTRGGGLLALLANQCRFVTGLRVRRAQQIAQLYGRLYSESSRRVLL. Residues 86–111 are a coiled coil; sequence DEERIQEEELQRSINEMKRLEEMSNM. Disordered stretches follow at residues 111-138 and 343-370; these read MFQSSGVQHHPPEPKAQTEGNEDSEGKE and MSSEAKATSQSSERKNEGSCGPARIEYA. Residues 112-327 enclose the START domain; that stretch reads FQSSGVQHHP…LHMATLKAKN (216 aa).

Post-translationally, proteolytically cleaved by PARL. Expressed in nasal epithelial cells. Down-regulated in nasal epithelial cells in patients experiencing an asthma exacerbation as compared to stable asthmatics and healthy controls.

Its subcellular location is the mitochondrion. In terms of biological role, may play a protective role in mucosal tissues by preventing exaggerated allergic responses. This chain is StAR-related lipid transfer protein 7, mitochondrial (STARD7), found in Homo sapiens (Human).